We begin with the raw amino-acid sequence, 505 residues long: Nostrin (505 aa).

One can recognise an F-BAR domain in the interval methionine 1–aspartate 260. Coiled coils occupy residues alanine 101–serine 128, isoleucine 160–leucine 222, and lysine 295–serine 332. Serine 114 bears the Phosphoserine mark. In terms of domain architecture, REM-1 spans alanine 292–glutamate 372. The 60-residue stretch at leucine 437–leucine 496 folds into the SH3 domain. Serine 478 is subject to Phosphoserine.

Homotrimer. Interacts with DAB2. Interacts with NOS3, DNM2, WASL and CAV1. Interacts (via SH3 domain) with DNM2; this interaction allows the recruitment of NOS3 to dynamin-positive structures. As to expression, present in pulmonary arterial endothelial cells (at protein level).

It is found in the cell membrane. It localises to the cytoplasmic vesicle. Its subcellular location is the cytoplasm. The protein resides in the cytoskeleton. Functionally, multivalent adapter protein which may decrease NOS3 activity by inducing its translocation away from the plasma membrane. In Bos taurus (Bovine), this protein is Nostrin.